Here is a 188-residue protein sequence, read N- to C-terminus: ATP synthase subunit b 2 (188 aa).

Residues M1 to A23 form a disordered region. The span at A8–D18 shows a compositional bias: low complexity. The helical transmembrane segment at L37–P57 threads the bilayer.

This sequence belongs to the ATPase B chain family. As to quaternary structure, F-type ATPases have 2 components, F(1) - the catalytic core - and F(0) - the membrane proton channel. F(1) has five subunits: alpha(3), beta(3), gamma(1), delta(1), epsilon(1). F(0) has three main subunits: a(1), b(2) and c(10-14). The alpha and beta chains form an alternating ring which encloses part of the gamma chain. F(1) is attached to F(0) by a central stalk formed by the gamma and epsilon chains, while a peripheral stalk is formed by the delta and b chains.

It is found in the cell inner membrane. F(1)F(0) ATP synthase produces ATP from ADP in the presence of a proton or sodium gradient. F-type ATPases consist of two structural domains, F(1) containing the extramembraneous catalytic core and F(0) containing the membrane proton channel, linked together by a central stalk and a peripheral stalk. During catalysis, ATP synthesis in the catalytic domain of F(1) is coupled via a rotary mechanism of the central stalk subunits to proton translocation. Its function is as follows. Component of the F(0) channel, it forms part of the peripheral stalk, linking F(1) to F(0). The b'-subunit is a diverged and duplicated form of b found in plants and photosynthetic bacteria. This is ATP synthase subunit b 2 (atpF2) from Rhodopseudomonas palustris (strain BisB18).